Reading from the N-terminus, the 95-residue chain is Large ribosomal subunit protein bL25 (95 aa).

This sequence belongs to the bacterial ribosomal protein bL25 family. As to quaternary structure, part of the 50S ribosomal subunit; part of the 5S rRNA/L5/L18/L25 subcomplex. Contacts the 5S rRNA. Binds to the 5S rRNA independently of L5 and L18.

This is one of the proteins that binds to the 5S RNA in the ribosome where it forms part of the central protuberance. The sequence is that of Large ribosomal subunit protein bL25 from Actinobacillus succinogenes (strain ATCC 55618 / DSM 22257 / CCUG 43843 / 130Z).